A 422-amino-acid chain; its full sequence is Lactose-binding protein (422 aa).

The first 28 residues, 1 to 28, serve as a signal peptide directing secretion; it reads MDYSRLLKRSVSAALTAAALLCSTAAFA. Positions 246–277 are lactose-binding; that stretch reads SNDGIRALTSGDVASVLRGVWITGTVKSQPDQ.

Belongs to the bacterial solute-binding protein 1 family.

Its subcellular location is the periplasm. Part of the binding-protein-dependent transport system for lactose. The sequence is that of Lactose-binding protein (lacE) from Rhizobium radiobacter (Agrobacterium tumefaciens).